The sequence spans 520 residues: Transactivator/viroplasmin protein (520 aa).

A disordered region spans residues 487–520; that stretch reads KDASADSGPKDGPPPTRSIVEKEDVPTTSSKQVD.

It belongs to the caulimoviridae viroplasmin family.

Its subcellular location is the host cytoplasm. Functionally, enhances the ribosomal termination-reinitiation event leading to the translation of major open reading frames on the polycistronic viral RNAs. This Arabidopsis thaliana (Mouse-ear cress) protein is Transactivator/viroplasmin protein.